We begin with the raw amino-acid sequence, 245 residues long: Eukaryotic translation initiation factor 6-2 (245 aa).

It belongs to the eIF-6 family. In terms of assembly, monomer. Associates with the 60S ribosomal subunit.

It is found in the cytoplasm. The protein localises to the nucleus. Its subcellular location is the nucleolus. Binds to the 60S ribosomal subunit and prevents its association with the 40S ribosomal subunit to form the 80S initiation complex in the cytoplasm. May also be involved in ribosome biogenesis. The polypeptide is Eukaryotic translation initiation factor 6-2 (Arabidopsis thaliana (Mouse-ear cress)).